An 81-amino-acid polypeptide reads, in one-letter code: Consomatin Le1 (81 aa).

Positions 1 to 22 (MQTAYWVMVMMMVWITAPLSEG) are cleaved as a signal peptide. The propeptide occupies 23 to 57 (GKPNDVIRGLVPDDLTPQLILRSLISRRRSDKDVR). Glu58 is subject to 4-carboxyglutamate. Cysteines 62 and 67 form a disulfide. The residue at position 64 (Trp64) is a D-tryptophan. Pro69 carries the 4-hydroxyproline modification. A propeptide spanning residues 71–81 (LWRRHDLKGKD) is cleaved from the precursor.

Belongs to the conotoxin C superfamily. Consomatin family. In terms of tissue distribution, expressed by the venom duct.

The protein resides in the secreted. Moderately activates human somatostatin receptors (SSTR) with a preferential activation of SSTR1 and SSTR4. In vivo, does not cause behavioral changes in mice within a few minutes of intracranial injection, but causes a progressive loss of movement thereafter. Four to five hours after injection, mice recover, even with the highest dose tested. Shows antinociception and antihyperalgesia activities in two mouse models of acute pain, most probably by acting outside the central nervous system. The polypeptide is Consomatin Le1 (Conus lenavati (Cone snail)).